A 148-amino-acid chain; its full sequence is Large ribosomal subunit protein bL9 (148 aa).

Belongs to the bacterial ribosomal protein bL9 family.

Functionally, binds to the 23S rRNA. This is Large ribosomal subunit protein bL9 from Pelotomaculum thermopropionicum (strain DSM 13744 / JCM 10971 / SI).